A 397-amino-acid polypeptide reads, in one-letter code: Elongation factor Tu (397 aa).

A tr-type G domain is found at 10–207 (KPHVNVGTIG…TLDTYIPEPE (198 aa)). Residues 19–26 (GHVDHGKT) form a G1 region. 19-26 (GHVDHGKT) is a GTP binding site. Mg(2+) is bound at residue threonine 26. The interval 60 to 64 (GITIN) is G2. The tract at residues 81-84 (DCPG) is G3. Residues 81 to 85 (DCPGH) and 136 to 139 (NKAD) contribute to the GTP site. Positions 136 to 139 (NKAD) are G4. Residues 174 to 176 (SAL) form a G5 region.

This sequence belongs to the TRAFAC class translation factor GTPase superfamily. Classic translation factor GTPase family. EF-Tu/EF-1A subfamily. As to quaternary structure, monomer.

It localises to the cytoplasm. It carries out the reaction GTP + H2O = GDP + phosphate + H(+). Functionally, GTP hydrolase that promotes the GTP-dependent binding of aminoacyl-tRNA to the A-site of ribosomes during protein biosynthesis. This Pseudomonas fluorescens (strain ATCC BAA-477 / NRRL B-23932 / Pf-5) protein is Elongation factor Tu.